A 208-amino-acid chain; its full sequence is 3-demethoxyubiquinol 3-hydroxylase (208 aa).

Glu57, Glu87, His90, Glu139, Glu171, and His174 together coordinate Fe cation.

This sequence belongs to the COQ7 family. Fe cation serves as cofactor.

It is found in the cell membrane. The enzyme catalyses a 5-methoxy-2-methyl-3-(all-trans-polyprenyl)benzene-1,4-diol + AH2 + O2 = a 3-demethylubiquinol + A + H2O. The protein operates within cofactor biosynthesis; ubiquinone biosynthesis. Catalyzes the hydroxylation of 2-nonaprenyl-3-methyl-6-methoxy-1,4-benzoquinol during ubiquinone biosynthesis. In Burkholderia cenocepacia (strain ATCC BAA-245 / DSM 16553 / LMG 16656 / NCTC 13227 / J2315 / CF5610) (Burkholderia cepacia (strain J2315)), this protein is 3-demethoxyubiquinol 3-hydroxylase.